The following is a 338-amino-acid chain: Histone acetyltransferase SAS2 (338 aa).

The span at 1 to 15 shows a compositional bias: polar residues; the sequence is MARSLSQSLTATTQK. The segment at 1–31 is disordered; sequence MARSLSQSLTATTQKLKGKKNGGKGKNKPSA. Residues 16–31 are compositionally biased toward basic residues; that stretch reads LKGKKNGGKGKNKPSA. In terms of domain architecture, MYST-type HAT spans 45-338; the sequence is LNERNIRQIQ…LKDEYLLIDD (294 aa). The C2HC MYST-type zinc-finger motif lies at 100-126; that stretch reads LFVCEYCFKYTDDQTRFVGHVASCPFQ. Position 168 is an N6-acetyllysine; by autocatalysis (lysine 168). Acetyl-CoA-binding positions include 209 to 211 and 216 to 222; these read ILI and QRRGLGL. The Proton donor/acceptor role is filled by glutamate 242. Acetyl-CoA-binding residues include serine 246 and lysine 323.

This sequence belongs to the MYST (SAS/MOZ) family. Interacts with CAC1. Component of the SAS complex, at least composed of SAS2, SAS4 and SAS5. These three proteins constitute the core of the complex and are sufficient to acetylate histones. SAS4 is essential for HAT activity of the complex, while SAS5 is required for maxiaml HAT activity. Post-translationally, autoacetylation at Lys-168 is required for proper function.

The protein resides in the cytoplasm. It localises to the nucleus. It carries out the reaction L-lysyl-[protein] + acetyl-CoA = N(6)-acetyl-L-lysyl-[protein] + CoA + H(+). In terms of biological role, histone acetyltransferase (HAT) subunit of the SAS complex, a multiprotein complex that acetylates 'Lys-16' of histone H4 and 'Lys-14' of histone H3. The SAS complex is however unable to acetylate nucleosomal histones. The complex is involved in transcriptional silencing at telomeres and at HML locus. Also involved in rDNA silencing and G0 control. This is Histone acetyltransferase SAS2 (SAS2) from Saccharomyces cerevisiae (strain ATCC 204508 / S288c) (Baker's yeast).